The primary structure comprises 131 residues: Large ribosomal subunit protein bL17 (131 aa).

This sequence belongs to the bacterial ribosomal protein bL17 family. As to quaternary structure, part of the 50S ribosomal subunit. Contacts protein L32.

This is Large ribosomal subunit protein bL17 from Methylobacillus flagellatus (strain ATCC 51484 / DSM 6875 / VKM B-1610 / KT).